A 355-amino-acid chain; its full sequence is N6-mAMP deaminase (355 aa).

Residues H13 and H15 each coordinate Zn(2+). N(6)-methyl-AMP contacts are provided by residues H15, N17, H65, 97 to 100 (TTPK), D160, and G190. H217 is a Zn(2+) binding site. Positions 220, 295, and 296 each coordinate N(6)-methyl-AMP. Residue E220 is the Proton donor of the active site. D295 is a binding site for Zn(2+).

The protein belongs to the metallo-dependent hydrolases superfamily. Adenosine and AMP deaminases family. Monomer. Zn(2+) serves as cofactor.

Its subcellular location is the cytoplasm. It localises to the cytosol. The enzyme catalyses N(6)-methyl-AMP + H2O + H(+) = IMP + methylamine. In terms of biological role, catalyzes the hydrolysis of the free cytosolic methylated adenosine nucleotide N(6)-methyl-AMP (N6-mAMP) to produce inositol monophosphate (IMP) and methylamine. Is required for the catabolism of cytosolic N6-mAMP, which is derived from the degradation of mRNA containing N6-methylated adenine (m6A). Does not possess deaminase activity toward adenosine, AMP, N6-methyladenosine, or N6-mATP in vitro. This is N6-mAMP deaminase from Arabidopsis thaliana (Mouse-ear cress).